The sequence spans 145 residues: MSFREVLIVGWQYLRAFVLIYLCLLTGNAISSLLPIIIPGSIIGMLILFVLLAFQLIPAHWAKPGCSLLLKNMTLLFLPIGVGVMNYYDQLSQQIIPIVFSCLISTAIVMIIVAYSSHYVHRERPIVGSTSEINNEQQKQEKQEK.

4 helical membrane passes run 6–26 (VLIVGWQYLRAFVLIYLCLLT), 34–54 (LPIIIPGSIIGMLILFVLLAF), 65–85 (GCSLLLKNMTLLFLPIGVGVM), and 95–115 (IIPIVFSCLISTAIVMIIVAY).

It belongs to the UPF0299 family.

The protein resides in the cell inner membrane. The polypeptide is UPF0299 membrane protein plu1549 (Photorhabdus laumondii subsp. laumondii (strain DSM 15139 / CIP 105565 / TT01) (Photorhabdus luminescens subsp. laumondii)).